The primary structure comprises 388 residues: Beta-1,4-galactosyltransferase 5 (388 aa).

Residues 1-14 (MRVRRGLLRLPRRS) lie on the Cytoplasmic side of the membrane. The chain crosses the membrane as a helical; Signal-anchor for type II membrane protein span at residues 15–35 (LLAALFFFSLSSSLLYFVYVA). The Lumenal segment spans residues 36–388 (PGIVNTYLFM…TPELAQVTEY (353 aa)). N-linked (GlcNAc...) asparagine glycans are attached at residues asparagine 77, asparagine 81, asparagine 90, asparagine 111, and asparagine 128. An intrachain disulfide couples cysteine 114 to cysteine 158. Residues 169–173 (PFRNR), 208–210 (FNR), 235–236 (VD), tyrosine 264, and tryptophan 296 each bind UDP-alpha-D-galactose. Cysteine 229 and cysteine 248 are disulfide-bonded. Aspartate 236 contributes to the Mn(2+) binding site. 298 to 301 (GEDD) provides a ligand contact to N-acetyl-D-glucosamine. 329–330 (YH) is a UDP-alpha-D-galactose binding site. Position 340 (arginine 340) interacts with N-acetyl-D-glucosamine. N-linked (GlcNAc...) asparagine glycans are attached at residues asparagine 364 and asparagine 373.

The protein belongs to the glycosyltransferase 7 family. As to quaternary structure, (Microbial infection) Interacts with porcine reproductive and respiratory syndrome virus GP5. Mn(2+) serves as cofactor.

It is found in the golgi apparatus. It localises to the golgi stack membrane. The enzyme catalyses a beta-D-glucosyl-(1&lt;-&gt;1')-N-acylsphing-4-enine + UDP-alpha-D-galactose = a beta-D-Gal-(1-&gt;4)-beta-D-Glc-(1&lt;-&gt;1)-Cer(d18:1(4E)) + UDP + H(+). It participates in protein modification; protein glycosylation. Its pathway is sphingolipid metabolism. Its function is as follows. Catalyzes the synthesis of lactosylceramide (LacCer) via the transfer of galactose from UDP-galactose to glucosylceramide (GlcCer). LacCer is the starting point in the biosynthesis of all gangliosides (membrane-bound glycosphingolipids) which play pivotal roles in the CNS including neuronal maturation and axonal and myelin formation. Plays a role in the glycosylation of BMPR1A and regulation of its protein stability. Essential for extraembryonic development during early embryogenesis. In terms of biological role, (Microbial infection) May play a role in the glycosylation of porcine reproductive and respiratory syndrome virus GP5 protein and may be involved in the regulation of viral proliferation. This is Beta-1,4-galactosyltransferase 5 (B4GALT5) from Sus scrofa (Pig).